Here is a 197-residue protein sequence, read N- to C-terminus: Protein LURP-one-related 9 (197 aa).

It belongs to the LOR family.

Functionally, might be related to the phospholipid scramblase and tubby-like superfamily of membrane tethered transcription factors. In Arabidopsis thaliana (Mouse-ear cress), this protein is Protein LURP-one-related 9.